We begin with the raw amino-acid sequence, 427 residues long: Inward rectifier potassium channel 2 (427 aa).

Over 1–81 (MGSVRTNRYS…IFTTCVDIRW (81 aa)) the chain is Cytoplasmic. The chain crosses the membrane as a helical span at residues 82–106 (RWMLVIFCLTFILSWLFFGCVFWLI). Topologically, residues 107–128 (ALLHGDLENQENNKPCVSQVSS) are extracellular. The segment at residues 129–140 (FTAAFLFSIETQ) is an intramembrane region (helical; Pore-forming). Residues 141–147 (TTIGYGF) constitute an intramembrane region (pore-forming). Positions 142–147 (TIGYGF) match the Selectivity filter motif. Topologically, residues 148–156 (RCVTDECPI) are extracellular. Residues 157 to 178 (AVFMVVFQSIVGCIIDAFIIGA) form a helical membrane-spanning segment. Residues 179 to 427 (VMAKMAKPKK…PRPLRRESEI (249 aa)) are Cytoplasmic-facing. The interval 181-208 (AKMAKPKKRNETLVFSHNAVVAMRDGKL) is polyphosphoinositide (PIP2)-binding. Residues 386–427 (EEDEIDTGVPESTSTDTHPDMDHHNQAGVPLEPRPLRRESEI) are disordered. The PDZ-binding signature appears at 425-427 (SEI).

This sequence belongs to the inward rectifier-type potassium channel (TC 1.A.2.1) family. KCNJ2 subfamily. In terms of assembly, homotetramer. Homomultimeric and heteromultimeric association with KCNJ4/Kir2.3, resulting in an enhanced G-protein-induced current. Associates, via its PDZ-recognition domain, with a complex containing LIN7A, LIN7B, LIN7C, DLG1, CASK and APBA1. In terms of tissue distribution, found in the apical basilar papilla of the inner ear, brain, muscle, cerebellum, heart and liver.

It is found in the cell membrane. The protein resides in the sarcolemma. It localises to the T-tubule. It catalyses the reaction K(+)(in) = K(+)(out). Activated by phosphatidylinositol 4,5 biphosphate (PtdIns(4,5)P2). Functionally, inward rectifier potassium channels are characterized by a greater tendency to allow potassium to flow into the cell rather than out of it. Their voltage dependence is regulated by the concentration of extracellular potassium; as external potassium is raised, the voltage range of the channel opening shifts to more positive voltages. The inward rectification is mainly due to the blockage of outward current by internal magnesium. Can be blocked by external barium. Probably participates in establishing action potential waveform and excitability of neuronal and muscle tissues. This chain is Inward rectifier potassium channel 2 (KCNJ2), found in Gallus gallus (Chicken).